Reading from the N-terminus, the 132-residue chain is Large-conductance mechanosensitive channel (132 aa).

3 helical membrane passes run Val-14–Leu-34, Ile-39–Ile-59, and Ile-68–Ile-88.

It belongs to the MscL family. In terms of assembly, homopentamer.

The protein localises to the cell membrane. Channel that opens in response to stretch forces in the membrane lipid bilayer. May participate in the regulation of osmotic pressure changes within the cell. The polypeptide is Large-conductance mechanosensitive channel (Latilactobacillus sakei subsp. sakei (strain 23K) (Lactobacillus sakei subsp. sakei)).